Reading from the N-terminus, the 378-residue chain is Mannitol-1-phosphate 5-dehydrogenase (378 aa).

Residue 4 to 15 (SVHFGAGNIGRG) participates in NAD(+) binding.

This sequence belongs to the mannitol dehydrogenase family.

The enzyme catalyses D-mannitol 1-phosphate + NAD(+) = beta-D-fructose 6-phosphate + NADH + H(+). The polypeptide is Mannitol-1-phosphate 5-dehydrogenase (Streptococcus pneumoniae (strain ATCC BAA-255 / R6)).